We begin with the raw amino-acid sequence, 620 residues long: Endoglucanase 6 (620 aa).

The signal sequence occupies residues 1–22; sequence MEKFAPVAALLLLLLCFPVAFS. The active-site Nucleophile is Asp-78. Catalysis depends on residues His-411, Asp-463, and Glu-472. Residues Asn-554 and Asn-564 are each glycosylated (N-linked (GlcNAc...) asparagine).

Belongs to the glycosyl hydrolase 9 (cellulase E) family.

The protein localises to the secreted. The enzyme catalyses Endohydrolysis of (1-&gt;4)-beta-D-glucosidic linkages in cellulose, lichenin and cereal beta-D-glucans.. The polypeptide is Endoglucanase 6 (Arabidopsis thaliana (Mouse-ear cress)).